Consider the following 195-residue polypeptide: Phosphoribosylglycinamide formyltransferase (195 aa).

12 to 14 serves as a coordination point for N(1)-(5-phospho-beta-D-ribosyl)glycinamide; sequence GSN. Residues lysine 65, 90-93, and asparagine 107 contribute to the (6R)-10-formyltetrahydrofolate site; that span reads MRLI. Histidine 109 functions as the Proton donor in the catalytic mechanism.

It belongs to the GART family.

The catalysed reaction is N(1)-(5-phospho-beta-D-ribosyl)glycinamide + (6R)-10-formyltetrahydrofolate = N(2)-formyl-N(1)-(5-phospho-beta-D-ribosyl)glycinamide + (6S)-5,6,7,8-tetrahydrofolate + H(+). Its pathway is purine metabolism; IMP biosynthesis via de novo pathway; N(2)-formyl-N(1)-(5-phospho-D-ribosyl)glycinamide from N(1)-(5-phospho-D-ribosyl)glycinamide (10-formyl THF route): step 1/1. Catalyzes the transfer of a formyl group from 10-formyltetrahydrofolate to 5-phospho-ribosyl-glycinamide (GAR), producing 5-phospho-ribosyl-N-formylglycinamide (FGAR) and tetrahydrofolate. This is Phosphoribosylglycinamide formyltransferase from Bacillus subtilis (strain 168).